The primary structure comprises 144 residues: uncharacterized protein (144 aa).

Residues 4-111 form the HIT domain; the sequence is VFCAIIAGEA…LPPRNGDKLS (108 aa). The short motif at 96–100 is the Histidine triad motif element; it reads HVHLH.

This is an uncharacterized protein from Mycobacterium tuberculosis (strain CDC 1551 / Oshkosh).